A 486-amino-acid chain; its full sequence is UDP-N-acetylmuramate--L-alanine ligase (486 aa).

Position 129–135 (129–135) interacts with ATP; it reads GTHGKTT.

It belongs to the MurCDEF family.

Its subcellular location is the cytoplasm. It catalyses the reaction UDP-N-acetyl-alpha-D-muramate + L-alanine + ATP = UDP-N-acetyl-alpha-D-muramoyl-L-alanine + ADP + phosphate + H(+). The protein operates within cell wall biogenesis; peptidoglycan biosynthesis. Its function is as follows. Cell wall formation. The sequence is that of UDP-N-acetylmuramate--L-alanine ligase from Vibrio atlanticus (strain LGP32) (Vibrio splendidus (strain Mel32)).